The chain runs to 88 residues: RQC P-site tRNA stabilizing factor (88 aa).

An S4 RNA-binding domain is found at 1-60 (MRLDKYLKVSRIIKRRTVAKEVADKGRIKVNGILAKSSTDLKVNDQVEIRFGNKLLLVKV).

This sequence belongs to the RqcP family. In terms of assembly, associates with stalled 50S ribosomal subunits. Binds to RqcH, 23S rRNA and the P-site tRNA. Does not require RqcH for association with 50S subunits.

Key component of the ribosome quality control system (RQC), a ribosome-associated complex that mediates the extraction of incompletely synthesized nascent chains from stalled ribosomes and their subsequent degradation. RqcH recruits Ala-charged tRNA, and with RqcP directs the elongation of stalled nascent chains on 50S ribosomal subunits, leading to non-templated C-terminal alanine extensions (Ala tail). The Ala tail promotes nascent chain degradation. RqcP is associated with the translocation-like movement of the peptidyl-tRNA from the A-site into the P-site. This is RQC P-site tRNA stabilizing factor from Streptococcus pneumoniae (strain ATCC BAA-255 / R6).